The chain runs to 124 residues: uncharacterized protein (124 aa).

A compositionally biased stretch (basic residues) spans 62–72; it reads KKNKKQTFLKH. Positions 62–86 are disordered; sequence KKNKKQTFLKHHQSDDHSENKVYKS. Positions 73–83 are enriched in basic and acidic residues; that stretch reads HQSDDHSENKV. Residues 80 to 112 are a coiled coil; it reads ENKVYKSKKLEKKIQQLNKKKQLIDTKINFLKE.

This is an uncharacterized protein from Dictyostelium discoideum (Social amoeba).